Here is a 466-residue protein sequence, read N- to C-terminus: Probable aminotransferase Rv3329 (466 aa).

Lysine 294 is modified (N6-(pyridoxal phosphate)lysine).

Belongs to the class-III pyridoxal-phosphate-dependent aminotransferase family. Pyridoxal 5'-phosphate serves as cofactor.

Its function is as follows. Probable aminotransferase. The polypeptide is Probable aminotransferase Rv3329 (Mycobacterium tuberculosis (strain ATCC 25618 / H37Rv)).